The primary structure comprises 180 residues: uncharacterized protein (180 aa).

The disordered stretch occupies residues 138–180 (SVMPVPMPQQNSDNGSTPHIVDSSKSKDKSSNDGDNGVFTGDE). A compositionally biased stretch (polar residues) spans 145–154 (PQQNSDNGST). Residues 159 to 169 (DSSKSKDKSSN) show a composition bias toward basic and acidic residues.

This is an uncharacterized protein from Acidianus filamentous virus 2 (isolate Italy/Pozzuoli) (AFV-2).